The sequence spans 405 residues: Aspartokinase (405 aa).

7 to 10 contacts ATP; it reads KYGG. 25–30 provides a ligand contact to substrate; the sequence is RIAHYR. Serine 41 is an ATP binding site. Residues 47–49, glutamate 74, 125–126, 150–153, and serine 153 contribute to the substrate site; these read TDE, LD, and RGGS. ATP is bound by residues 173–174, 179–184, and arginine 209; these read TD and YTTDPH. ACT domains are found at residues 263–342 and 344–405; these read IGLI…IAKV and IVGV…LDKA. Residues aspartate 270, 274 to 275, 288 to 290, glutamine 294, 355 to 356, 369 to 370, and 376 to 377 contribute to the substrate site; these read IA, AVD, VP, NI, and SE.

Belongs to the aspartokinase family. As to quaternary structure, heterotetramer consisting of 2 isoforms Alpha (catalytic and regulation) and of a homodimer of 2 isoforms Beta (regulation and thermostability).

The enzyme catalyses L-aspartate + ATP = 4-phospho-L-aspartate + ADP. Its pathway is amino-acid biosynthesis; L-lysine biosynthesis via DAP pathway; (S)-tetrahydrodipicolinate from L-aspartate: step 1/4. It functions in the pathway amino-acid biosynthesis; L-methionine biosynthesis via de novo pathway; L-homoserine from L-aspartate: step 1/3. The protein operates within amino-acid biosynthesis; L-threonine biosynthesis; L-threonine from L-aspartate: step 1/5. With respect to regulation, inhibited by threonine. Functionally, catalyzes the phosphorylation of the beta-carboxyl group of aspartic acid with ATP to yield 4-phospho-L-aspartate, which is involved in the branched biosynthetic pathway leading to the biosynthesis of amino acids threonine, isoleucine and methionine. This Thermus thermophilus protein is Aspartokinase (ask).